The primary structure comprises 255 residues: Hydroxyacylglutathione hydrolase (255 aa).

Zn(2+) contacts are provided by histidine 56, histidine 58, aspartate 60, histidine 61, histidine 114, aspartate 133, and histidine 171.

The protein belongs to the metallo-beta-lactamase superfamily. Glyoxalase II family. As to quaternary structure, monomer. The cofactor is Zn(2+).

It catalyses the reaction an S-(2-hydroxyacyl)glutathione + H2O = a 2-hydroxy carboxylate + glutathione + H(+). It functions in the pathway secondary metabolite metabolism; methylglyoxal degradation; (R)-lactate from methylglyoxal: step 2/2. Thiolesterase that catalyzes the hydrolysis of S-D-lactoyl-glutathione to form glutathione and D-lactic acid. This chain is Hydroxyacylglutathione hydrolase, found in Cereibacter sphaeroides (strain ATCC 17025 / ATH 2.4.3) (Rhodobacter sphaeroides).